The primary structure comprises 177 residues: Nucleoside triphosphate/diphosphate phosphatase (177 aa).

Catalysis depends on arginine 23, which acts as the Proton donor. Positions 87, 103, 105, 107, 120, and 123 each coordinate Mg(2+).

Belongs to the Ntdp family. Mg(2+) is required as a cofactor.

The catalysed reaction is a ribonucleoside 5'-triphosphate + H2O = a ribonucleoside 5'-diphosphate + phosphate + H(+). The enzyme catalyses a ribonucleoside 5'-diphosphate + H2O = a ribonucleoside 5'-phosphate + phosphate + H(+). Has nucleoside phosphatase activity towards nucleoside triphosphates and nucleoside diphosphates. This Streptococcus equi subsp. zooepidemicus (strain MGCS10565) protein is Nucleoside triphosphate/diphosphate phosphatase.